Reading from the N-terminus, the 351-residue chain is Phosphoribosylformylglycinamidine cyclo-ligase (351 aa).

The protein belongs to the AIR synthase family.

The protein localises to the cytoplasm. It carries out the reaction 2-formamido-N(1)-(5-O-phospho-beta-D-ribosyl)acetamidine + ATP = 5-amino-1-(5-phospho-beta-D-ribosyl)imidazole + ADP + phosphate + H(+). Its pathway is purine metabolism; IMP biosynthesis via de novo pathway; 5-amino-1-(5-phospho-D-ribosyl)imidazole from N(2)-formyl-N(1)-(5-phospho-D-ribosyl)glycinamide: step 2/2. The chain is Phosphoribosylformylglycinamidine cyclo-ligase from Burkholderia ambifaria (strain ATCC BAA-244 / DSM 16087 / CCUG 44356 / LMG 19182 / AMMD) (Burkholderia cepacia (strain AMMD)).